The primary structure comprises 243 residues: Cyclin-dependent kinase 20 (243 aa).

Residues 4-243 enclose the Protein kinase domain; it reads YCILGRIGEG…IHLSCRFLSV (240 aa). Residues 10–18 and lysine 33 contribute to the ATP site; that span reads IGEGAHGIV. Aspartate 127 (proton acceptor) is an active-site residue.

It belongs to the protein kinase superfamily. CMGC Ser/Thr protein kinase family. CDC2/CDKX subfamily. Monomer. Interacts with TBC1D32 and MAK.

The protein localises to the nucleus. It localises to the cytoplasm. Its subcellular location is the cell projection. The protein resides in the cilium. It carries out the reaction L-seryl-[protein] + ATP = O-phospho-L-seryl-[protein] + ADP + H(+). The enzyme catalyses L-threonyl-[protein] + ATP = O-phospho-L-threonyl-[protein] + ADP + H(+). Required for high-level Shh responses in the developing neural tube. Together with TBC1D32, controls the structure of the primary cilium by coordinating assembly of the ciliary membrane and axoneme, allowing GLI2 to be properly activated in response to SHH signaling. Involved in cell growth. Activates CDK2, a kinase involved in the control of the cell cycle, by phosphorylating residue 'Thr-160'. In Macaca mulatta (Rhesus macaque), this protein is Cyclin-dependent kinase 20 (CDK20).